Here is a 436-residue protein sequence, read N- to C-terminus: MNVHESHPRRDRDLENITLEALTVPWRLQFRVDEALYAVNPNGWTCYIEERDQRCLRVTNNCVISLLKSDLKRRYQTCTLNIGIRVAVPQNYVVILAKLTDPDPTSRGIPIIQVANGLIDSGYRGSIRAVLFFEKSCIIPKNGLAIRLSLVKLASPNLNTRVLFNLSDITPHLECGPDFSTSIETAVRLGSGETKPLLPPSGGGIWAGTGCRALACLYNDRVCKASHYTSSDKNIAFVVRYNDSTSVLGLKDFPTAEDETFVRFYTSGQFATLIPFFETFTPKRTEDAAYDIAAPGDIRLGALSSTTIMIQQRYVCMDDSVIPCIFGRSSMNLRGLIIIPSRWLPNSWLTITICNLTEMTVMIRCGDRIAQLLLVDHESATLIPPTNDTTGMFPTVGKCRRPGASVGEPKWRETLEFDTEAYSSERQFSGFGSTGI.

Residues 328–330 (RSS) and 431–432 (FG) each bind substrate.

This sequence belongs to the dUTPase family. Mg(2+) is required as a cofactor.

The catalysed reaction is dUTP + H2O = dUMP + diphosphate + H(+). Its function is as follows. Involved in nucleotide metabolism: produces dUMP, the immediate precursor of thymidine nucleotides and decreases the intracellular concentration of dUTP to avoid uracil incorporation into viral DNA. In Gallid herpesvirus 2 (strain Chicken/Md5/ATCC VR-987) (GaHV-2), this protein is Deoxyuridine 5'-triphosphate nucleotidohydrolase.